Reading from the N-terminus, the 707-residue chain is Tryptophan synthase (707 aa).

Residues 1 to 297 (MSEQLRQTFA…VKKEILDEFD (297 aa)) are tryptophan synthase alpha chain. Active-site proton acceptor residues include Glu-50 and Asp-61. A tryptophan synthase beta chain region spans residues 298–707 (ENHKHPIRFG…DLRFEEDPSA (410 aa)). Lys-384 is modified (N6-(pyridoxal phosphate)lysine). Ser-540 and Ser-683 each carry phosphoserine.

It in the N-terminal section; belongs to the TrpA family. This sequence in the C-terminal section; belongs to the TrpB family. Pyridoxal 5'-phosphate serves as cofactor.

It carries out the reaction (1S,2R)-1-C-(indol-3-yl)glycerol 3-phosphate + L-serine = D-glyceraldehyde 3-phosphate + L-tryptophan + H2O. It participates in amino-acid biosynthesis; L-tryptophan biosynthesis; L-tryptophan from chorismate: step 5/5. The sequence is that of Tryptophan synthase (TRP5) from Saccharomyces cerevisiae (strain ATCC 204508 / S288c) (Baker's yeast).